The primary structure comprises 585 residues: Membrane protein insertase YidC (585 aa).

6 helical membrane-spanning segments follow: residues 5-25 (SVTG…FMSP), 338-358 (FGWD…AFTW), 362-382 (FVSN…LVTY), 432-452 (LGGC…FYVF), 482-502 (IPMY…TVFL), and 518-538 (IMLY…PSGL).

The protein belongs to the OXA1/ALB3/YidC family. Type 1 subfamily. In terms of assembly, interacts with the Sec translocase complex via SecD. Specifically interacts with transmembrane segments of nascent integral membrane proteins during membrane integration.

It is found in the cell inner membrane. In terms of biological role, required for the insertion and/or proper folding and/or complex formation of integral membrane proteins into the membrane. Involved in integration of membrane proteins that insert both dependently and independently of the Sec translocase complex, as well as at least some lipoproteins. Aids folding of multispanning membrane proteins. The protein is Membrane protein insertase YidC of Chlorobium luteolum (strain DSM 273 / BCRC 81028 / 2530) (Pelodictyon luteolum).